We begin with the raw amino-acid sequence, 63 residues long: Protein sigN172 (63 aa).

The sequence is that of Protein sigN172 from Dictyostelium discoideum (Social amoeba).